The chain runs to 188 residues: Elongation factor P (188 aa).

This sequence belongs to the elongation factor P family.

The protein resides in the cytoplasm. The protein operates within protein biosynthesis; polypeptide chain elongation. Its function is as follows. Involved in peptide bond synthesis. Stimulates efficient translation and peptide-bond synthesis on native or reconstituted 70S ribosomes in vitro. Probably functions indirectly by altering the affinity of the ribosome for aminoacyl-tRNA, thus increasing their reactivity as acceptors for peptidyl transferase. This chain is Elongation factor P, found in Mycoplasma mobile (strain ATCC 43663 / 163K / NCTC 11711) (Mesomycoplasma mobile).